Consider the following 114-residue polypeptide: Nucleoid-associated protein SGR_3378 (114 aa).

It belongs to the YbaB/EbfC family. As to quaternary structure, homodimer.

The protein resides in the cytoplasm. Its subcellular location is the nucleoid. Its function is as follows. Binds to DNA and alters its conformation. May be involved in regulation of gene expression, nucleoid organization and DNA protection. In Streptomyces griseus subsp. griseus (strain JCM 4626 / CBS 651.72 / NBRC 13350 / KCC S-0626 / ISP 5235), this protein is Nucleoid-associated protein SGR_3378.